The primary structure comprises 226 residues: Deoxyribose-phosphate aldolase (226 aa).

D93 functions as the Proton donor/acceptor in the catalytic mechanism. K159 (schiff-base intermediate with acetaldehyde) is an active-site residue. K189 functions as the Proton donor/acceptor in the catalytic mechanism.

The protein belongs to the DeoC/FbaB aldolase family. DeoC type 1 subfamily.

The protein localises to the cytoplasm. It carries out the reaction 2-deoxy-D-ribose 5-phosphate = D-glyceraldehyde 3-phosphate + acetaldehyde. Its pathway is carbohydrate degradation; 2-deoxy-D-ribose 1-phosphate degradation; D-glyceraldehyde 3-phosphate and acetaldehyde from 2-deoxy-alpha-D-ribose 1-phosphate: step 2/2. Its function is as follows. Catalyzes a reversible aldol reaction between acetaldehyde and D-glyceraldehyde 3-phosphate to generate 2-deoxy-D-ribose 5-phosphate. The protein is Deoxyribose-phosphate aldolase of Mycobacterium marinum (strain ATCC BAA-535 / M).